The following is a 311-amino-acid chain: Ferrochelatase (311 aa).

Fe cation-binding residues include H179 and E260.

The protein belongs to the ferrochelatase family.

The protein resides in the cytoplasm. The catalysed reaction is heme b + 2 H(+) = protoporphyrin IX + Fe(2+). It participates in porphyrin-containing compound metabolism; protoheme biosynthesis; protoheme from protoporphyrin-IX: step 1/1. Functionally, catalyzes the ferrous insertion into protoporphyrin IX. This Helicobacter hepaticus (strain ATCC 51449 / 3B1) protein is Ferrochelatase.